The sequence spans 317 residues: Transcriptional activator protein med (317 aa).

The first 17 residues, methionine 1–glycine 17, serve as a signal peptide directing secretion. Cysteine 18 carries the N-palmitoyl cysteine lipid modification. Cysteine 18 carries S-diacylglycerol cysteine lipidation.

It belongs to the BMP lipoprotein family.

The protein localises to the cell membrane. Its function is as follows. Positive activator of the comK gene. This is Transcriptional activator protein med (med) from Bacillus subtilis (strain 168).